Consider the following 121-residue polypeptide: RING-box protein HRT1 (121 aa).

A disordered region spans residues 1–31; that stretch reads MSNEVDRMDVDEDESQNIAQSSNQSAPVETK. The residue at position 15 (Ser-15) is a Phosphoserine. Residues 16–26 show a composition bias toward low complexity; sequence QNIAQSSNQSA. 11 residues coordinate Zn(2+): Cys-55, Cys-58, Cys-66, Cys-69, Cys-81, Cys-88, His-90, His-93, His-95, Cys-107, and Asp-110. Residues 55–111 form an RING-type zinc finger; sequence CAICRNHIMEPCIECQPKAMTDTDNECVAAWGVCNHAFHLHCINKWIKTRDACPLDN.

Belongs to the RING-box family. Component of multiple cullin-RING ligases (CRLs) composed of 4 subunits: the RING protein HRT1, a cullin, a linker protein, and one of many alternative substrate receptors. Component of SCF E3 ubiquitin ligase complexes containing the cullin CDC53, the linker protein SKP1/CBF3D, and substrate receptors containing F-box motifs like DAS1 or GRR1. Component of RTT101(MMS1) E3 ubiquitin ligase complexes containing the cullin RTT101, the linker protein MMS1, and substrate receptors belonging to a protein family described as DCAF (DDB1- and CUL4-associated factor) like MMS22. Component of CRL3 E3 ubiquitin ligase complexes containing the cullin CUL3, the linker protein ELC1, and substrate receptors containing SOCS-box motifs like ELA1. Interacts with CDC53, CUL3, RTT101, CDC4 and CDC34/UBC3.

The protein resides in the cytoplasm. Its subcellular location is the nucleus. It participates in protein modification; protein ubiquitination. In terms of biological role, core component of multiple cullin-RING-based E3 ubiquitin-protein ligase complexes (CRLs), which mediate the ubiquitination of target proteins. Recruits the E2 ubiquitin-conjugating enzyme CDC34/UBC3 to the complex and brings it into close proximity to the substrate. Also stimulates CDC34/UBC3 autoubiquitination and promotes the neddylation of CDC53 and RTT101. Component of the SCF(CDC4) ubiquitin ligase required for ubiquitination of the cyclin-dependent kinase inhibitor SIC1 and for the G1-to-S phase transition. Component of the RTT101(MMS1-MMS22) ubiquitin ligase that promotes fork progression through damaged DNA or natural pause sites. Component of the CRL3(ELA1) ubiquitin ligase required for ubiquitination of RPB1, the largest subunit of RNA polymerase II (Pol II), which targets Pol II for proteasomal degradation in DNA-damaged cells. The chain is RING-box protein HRT1 (HRT1) from Saccharomyces cerevisiae (strain ATCC 204508 / S288c) (Baker's yeast).